The chain runs to 133 residues: Ribosome-binding factor A (133 aa).

It belongs to the RbfA family. Monomer. Binds 30S ribosomal subunits, but not 50S ribosomal subunits or 70S ribosomes.

The protein localises to the cytoplasm. Its function is as follows. One of several proteins that assist in the late maturation steps of the functional core of the 30S ribosomal subunit. Associates with free 30S ribosomal subunits (but not with 30S subunits that are part of 70S ribosomes or polysomes). Required for efficient processing of 16S rRNA. May interact with the 5'-terminal helix region of 16S rRNA. The sequence is that of Ribosome-binding factor A from Klebsiella pneumoniae (strain 342).